Consider the following 701-residue polypeptide: SH3 domain-binding protein 1 (701 aa).

Residues 1–10 are compositionally biased toward basic residues; the sequence is MMKRQLHRMR. Disordered regions lie at residues 1 to 23 and 160 to 182; these read MMKRQLHRMRQLAQTGSLGRTPE and SQATKNSGSSQGLGGSPGSHSHT. The interaction with CGNL1 stretch occupies residues 1–275; the sequence is MMKRQLHRMR…TATHFPRVYG (275 aa). In terms of domain architecture, BAR spans 17–262; that stretch reads SLGRTPETAE…RENHGQADHS (246 aa). Phosphoserine is present on residues Ser-175, Ser-241, Ser-262, and Ser-264. In terms of domain architecture, Rho-GAP spans 276–469; sequence VSLATHLQEL…ALIQSADTLF (194 aa). Residues 470–701 form an interaction with CD2AP region; it reads PGDINFNVSG…RPRSLASETN (232 aa). Positions 496–701 are disordered; sequence SEELPSTAVP…RPRSLASETN (206 aa). Pro residues predominate over residues 508–522; that stretch reads ATTPAPAPAPAPAPA. Ser-544 and Ser-550 each carry phosphoserine. Composition is skewed to pro residues over residues 570–579 and 587–596; these read PARPTMPPPQ and PPAPPLPPGS. A Phosphothreonine modification is found at Thr-601. The SH3-binding signature appears at 616–625; it reads APTVPPPLPP. 2 stretches are compositionally biased toward pro residues: residues 618-630 and 641-652; these read TVPPPLPPTPPQP and SPSPASPGPASP. At Thr-626 the chain carries Phosphothreonine. Ser-653 bears the Phosphoserine mark. Positions 666–677 are enriched in low complexity; the sequence is GAATAEGGAPEA. The segment covering 682–692 has biased composition (pro residues); it reads PTPPAIPPQPR.

As to quaternary structure, interacts with RAC1. Interacts with the exocyst via EXOC4 and EXOC8; required for the localization of both SH3BP1 and the exocyst to the leading edge of migrating cells. Interacts with CD2AP and CGNL1; probably part of a complex at cell junctions. Interacts with CAPZA1; recruits CAPZA1 to forming cell junctions. May interact with AFDN. Interacts with PLXND1; they dissociate upon SEMA3E binding to PLXND1 allowing SH3BP1 to transduce downstream signal through RAC1 inactivation. Interacts with ABL1, GRB2 and SRC (via SH3 domain).

The protein localises to the cell projection. It is found in the cell junction. The protein resides in the tight junction. It localises to the adherens junction. Its subcellular location is the phagocytic cup. The protein localises to the nucleus. It is found in the cytoplasm. The protein resides in the cytosol. Its function is as follows. GTPase activating protein (GAP) which specifically converts GTP-bound Rho-type GTPases including RAC1 and CDC42 in their inactive GDP-bound form. By specifically inactivating RAC1 at the leading edge of migrating cells, it regulates the spatiotemporal organization of cell protrusions which is important for proper cell migration. Also negatively regulates CDC42 in the process of actin remodeling and the formation of epithelial cell junctions. Through its GAP activity toward RAC1 and/or CDC42 plays a specific role in phagocytosis of large particles. Specifically recruited by a PI3 kinase/PI3K-dependent mechanism to sites of large particles engagement, inactivates RAC1 and/or CDC42 allowing the reorganization of the underlying actin cytoskeleton required for engulfment. It also plays a role in angiogenesis and the process of repulsive guidance as part of a semaphorin-plexin signaling pathway. Following the binding of PLXND1 to extracellular SEMA3E it dissociates from PLXND1 and inactivates RAC1, inducing the intracellular reorganization of the actin cytoskeleton and the collapse of cells. In Homo sapiens (Human), this protein is SH3 domain-binding protein 1.